Reading from the N-terminus, the 449-residue chain is Plasmepsin IV (449 aa).

Topologically, residues 1-37 (MALTVKEEEFSNTLIKNASAFDRLKLGNLKNLKIQKK) are cytoplasmic. A propeptide spanning residues 1–121 (MALTVKEEEF…SGYAQKGYLG (121 aa)) is cleaved from the precursor. A helical; Signal-anchor for type II membrane protein membrane pass occupies residues 38–58 (LQFLYLILFVLITGVFFFFLI). Topologically, residues 59–449 (GNFYSHRKLY…SVGFAVAKNL (391 aa)) are lumenal. The 308-residue stretch at 137–444 (FYGEGQIGTN…DYEKESVGFA (308 aa)) folds into the Peptidase A1 domain. Residue Asp-155 is part of the active site. Cys-168 and Cys-173 form a disulfide bridge. Residue Asp-335 is part of the active site. Cys-370 and Cys-406 are disulfide-bonded.

This sequence belongs to the peptidase A1 family. As to quaternary structure, component of the hemozoin formation complex (HFC) composed of falcipains FP2A and/or FP2B, plasmepsins PMII, PMIII/HAP and PMIV, heme detoxifying protein HDP and falcilysin FLN. The HFC complex is involved in hemoglobin degradation and detoxification of heme in the food vacuole during the asexual blood stage. Post-translationally, proteolytically cleaved into the soluble active mature form by cysteine proteases in the digestive vacuole of trophozoites. Proteolysis requires an acidic environment. Autoprocessing or transprocessing by other plasmepsins such as PMII may serve as an alternate activation system.

The protein resides in the membrane. The protein localises to the vacuole lumen. It catalyses the reaction Hydrolysis of the bonds linking certain hydrophobic residues in hemoglobin or globin. Also cleaves small molecules substrates such as Ala-Leu-Glu-Arg-Thr-Phe-|-Phe(NO2)-Ser-Phe-Pro-Thr.. With respect to regulation, inhibited by pepstatin A. During the asexual blood stage, catalyzes the cleavage of denatured host hemoglobin (Hb) or globins. Digestion of host Hb is an essential step which provides the parasite with amino acids for protein synthesis, and regulates osmolarity. This Plasmodium falciparum (isolate HB3) protein is Plasmepsin IV.